A 313-amino-acid chain; its full sequence is Ribosomal RNA small subunit methyltransferase H (313 aa).

Residues 35 to 37 (GGH), Asp-55, Phe-79, Asp-101, and Gln-108 each bind S-adenosyl-L-methionine.

The protein belongs to the methyltransferase superfamily. RsmH family.

It localises to the cytoplasm. It carries out the reaction cytidine(1402) in 16S rRNA + S-adenosyl-L-methionine = N(4)-methylcytidine(1402) in 16S rRNA + S-adenosyl-L-homocysteine + H(+). Its function is as follows. Specifically methylates the N4 position of cytidine in position 1402 (C1402) of 16S rRNA. This is Ribosomal RNA small subunit methyltransferase H from Enterobacter sp. (strain 638).